Reading from the N-terminus, the 698-residue chain is Serotransferrin (698 aa).

A signal peptide spans 1-19 (MRFAVGALLACAALGLCLA). Transferrin-like domains lie at 25-347 (VKWC…NQRE) and 360-683 (VKWC…NIRK). Cystine bridges form between C28–C67 and C38–C58. Dimethylated arginine is present on R42. Fe(3+) is bound by residues D82 and Y114. 8 disulfides stabilise this stretch: C137/C213, C156/C350, C177/C193, C180/C196, C190/C198, C246/C260, C363/C395, and C373/C386. Residues T139, R143, A145, and G146 each contribute to the hydrogencarbonate site. A Fe(3+)-binding site is contributed by Y207. H268 provides a ligand contact to Fe(3+). S388 carries the phosphoserine modification. Fe(3+) is bound by residues D410 and Y447. Intrachain disulfides connect C420–C693, C435–C656, C471–C542, C495–C684, C505–C519, C516–C525, C582–C596, and C634–C639. Residues T473, R477, A479, and G480 each coordinate hydrogencarbonate. A glycan (N-linked (GlcNAc...) asparagine) is linked at N512. Y536 contacts Fe(3+). Residue H604 coordinates Fe(3+). A Phosphoserine modification is found at S685.

This sequence belongs to the transferrin family. Monomer. Part of a complex composed of SLC40A1/ferroportin, TF/transferrin and HEPH/hephaestin that transfers iron from cells to transferrin. In terms of tissue distribution, expressed by the liver and secreted in plasma.

It is found in the secreted. Functionally, transferrins are iron binding transport proteins which can bind two Fe(3+) ions in association with the binding of an anion, usually bicarbonate. It is responsible for the transport of iron from sites of absorption and heme degradation to those of storage and utilization. Serum transferrin may also have a further role in stimulating cell proliferation. The protein is Serotransferrin (Tf) of Rattus norvegicus (Rat).